The sequence spans 348 residues: UDP-rhamnose/UDP-galactose transporter 2 (348 aa).

Helical transmembrane passes span 12–32, 44–64, 81–101, 104–124, 133–153, 160–180, 196–216, 230–250, 257–277, and 286–306; these read AVSDVGAWAMNVTSSVGIIMA, FSFATTLTGFHFALTALVGMV, LLWFSLVANISIAAMNFSLML, VGFYQISKLSMIPVVCVMEWV, EVKASVMVVVVGVGICTVTDV, FICACTAVFSTSLQQISIGSL, APIQAISLLIFGPFVDYFLSG, LCILLSCALAVFCNISQYLCI, SFQVLGHMKTVCVLTLGWLIF, and IAGMVLAVVGMVIYSWAVELE.

This sequence belongs to the TPT transporter family. TPT (TC 2.A.7.9) subfamily.

Its subcellular location is the golgi apparatus membrane. Nucleotide-sugar transporter that transports UDP-rhamnose or UDP-galactose and UMP in a strict counter-exchange mode. In Arabidopsis thaliana (Mouse-ear cress), this protein is UDP-rhamnose/UDP-galactose transporter 2.